Here is a 536-residue protein sequence, read N- to C-terminus: MNDFWQHCSALLERELTPQQYVTWIKPLAPVAFDAAANTLSIAAPNRFKLDWVKSQFSGRISDLARDFWNAPIEVQFVLDPKVGQRSAAGAAPLAPRAPLPAANPAPVTAGPAPSGAADANAPAPAGMNAATAAAVAAVAAAQAAQAAQANAAALNADEAADLDLPSLTAHEAAAGRRTWRPGAASANSEAADSMYERSKLNPVLTFDNFVTGKANQLARAAAIQVADNPGISYNPLFLYGGVGLGKTHLIHAIGNQLLLDKPGARIRYIHAEQYVSDVVKAYQRKAFDDFKRYYHSLDLLLIDDIQFFSGKSRTQEEFFYAFEALVANKAQVIITSDTYPKEISGIDDRLISRFDSGLTVAIEPPELEMRVAILMRKAQSEGVSLSEDVAFFVAKHLRSNVRELEGALRKILAYSKFHGREITIELTKEALKDLLTVQNRQISVENIQKTVADFYNIKVADMYSKKRPANIARPRQIAMYLAKELTQKSLPEIGELFGGRDHTTVLHAVRKIADERGKDAQLNHELHVLEQTLKG.

Residues 1-72 form a domain I, interacts with DnaA modulators region; it reads MNDFWQHCSA…DLARDFWNAP (72 aa). The segment at 72–199 is domain II; that stretch reads PIEVQFVLDP…EAADSMYERS (128 aa). A disordered region spans residues 97–121; that stretch reads RAPLPAANPAPVTAGPAPSGAADAN. The segment covering 105 to 121 has biased composition (low complexity); that stretch reads PAPVTAGPAPSGAADAN. The segment at 200-416 is domain III, AAA+ region; the sequence is KLNPVLTFDN…GALRKILAYS (217 aa). The ATP site is built by Gly244, Gly246, Lys247, and Thr248. The interval 417–536 is domain IV, binds dsDNA; it reads KFHGREITIE…LHVLEQTLKG (120 aa).

Belongs to the DnaA family. In terms of assembly, oligomerizes as a right-handed, spiral filament on DNA at oriC.

Its subcellular location is the cytoplasm. Plays an essential role in the initiation and regulation of chromosomal replication. ATP-DnaA binds to the origin of replication (oriC) to initiate formation of the DNA replication initiation complex once per cell cycle. Binds the DnaA box (a 9 base pair repeat at the origin) and separates the double-stranded (ds)DNA. Forms a right-handed helical filament on oriC DNA; dsDNA binds to the exterior of the filament while single-stranded (ss)DNA is stabiized in the filament's interior. The ATP-DnaA-oriC complex binds and stabilizes one strand of the AT-rich DNA unwinding element (DUE), permitting loading of DNA polymerase. After initiation quickly degrades to an ADP-DnaA complex that is not apt for DNA replication. Binds acidic phospholipids. The protein is Chromosomal replication initiator protein DnaA of Burkholderia thailandensis (strain ATCC 700388 / DSM 13276 / CCUG 48851 / CIP 106301 / E264).